Consider the following 452-residue polypeptide: Prenyltransferase fsdK (452 aa).

It belongs to the tryptophan dimethylallyltransferase family.

The protein operates within mycotoxin biosynthesis. In terms of biological role, prenyltransferase; part of the gene cluster that mediates the biosynthesis of fusaridione A, a bright yellow trans-fused decalin-containing tetramic acid with antimicrobial activity. The PKS module of fsdS catalyzes the formation of the polyketide unit which is then conjugated to L-tyrosine by the condensation domain of the fsdS NRPS module. Activity of the Dieckmann cyclase domain (RED) results in release of the intermediate fusaridione A. The unstable pyrrolidinedione ring of fusaridione A is opened through a reverse-Dieckmann reaction to afford its ring-opened form. This Fusarium heterosporum protein is Prenyltransferase fsdK.